The sequence spans 145 residues: Partner of bursicon (145 aa).

An N-terminal signal peptide occupies residues 1–28; that stretch reads MKENFSIMFIHSIFLILIIFIYSNETIA. Cystine bridges form between C36-C94, C60-C109, C69-C135, C73-C137, and C91-C140. Residues 36–131 enclose the CTCK domain; sequence CETLQSEVHI…NGVMEIKIRE (96 aa).

In terms of assembly, heterodimer of burs and pburs.

It is found in the secreted. In terms of biological role, final heterodimeric neurohormone released at the end of the molting cycle, involved in the sclerotization (tanning) of the insect cuticle, melanization and wing spreading. In Apis mellifera (Honeybee), this protein is Partner of bursicon (pburs).